Reading from the N-terminus, the 185-residue chain is Probable gluconokinase (185 aa).

11–18 contributes to the ATP binding site; sequence GVSGSGKS.

It belongs to the gluconokinase GntK/GntV family.

The enzyme catalyses D-gluconate + ATP = 6-phospho-D-gluconate + ADP + H(+). Its pathway is carbohydrate acid metabolism; D-gluconate degradation. In Rattus norvegicus (Rat), this protein is Probable gluconokinase (Idnk).